A 394-amino-acid polypeptide reads, in one-letter code: Elongation factor Tu (394 aa).

The tr-type G domain maps to 10–204 (KPHVNIGTIG…AVDSYIPQPV (195 aa)). The tract at residues 19-26 (GHVDHGKT) is G1. GTP is bound at residue 19–26 (GHVDHGKT). A Mg(2+)-binding site is contributed by threonine 26. The tract at residues 60-64 (GITIS) is G2. The segment at 81 to 84 (DCPG) is G3. Residues 81–85 (DCPGH) and 136–139 (NKVD) each bind GTP. Positions 136–139 (NKVD) are G4. Residues 174-176 (SAL) are G5.

It belongs to the TRAFAC class translation factor GTPase superfamily. Classic translation factor GTPase family. EF-Tu/EF-1A subfamily. In terms of assembly, monomer.

The protein localises to the cytoplasm. The enzyme catalyses GTP + H2O = GDP + phosphate + H(+). In terms of biological role, GTP hydrolase that promotes the GTP-dependent binding of aminoacyl-tRNA to the A-site of ribosomes during protein biosynthesis. This chain is Elongation factor Tu, found in Rickettsia montanensis.